Consider the following 223-residue polypeptide: Exosome complex component RRP46 (223 aa).

Belongs to the RNase PH family. As to quaternary structure, component of the RNA exosome complex. Specifically part of the catalytically inactive RNA exosome core complex (Exo-9) which may associate with the catalytic subunits RRP6 and DIS3 in cytoplasmic- and nuclear-specific RNA exosome complex forms. Exo-9 is formed by a hexameric base ring of RNase PH domain-containing subunits and a cap ring consisting of CSL4, RRP4 and RRP40.

It localises to the cytoplasm. Its subcellular location is the nucleus. It is found in the nucleolus. In terms of biological role, non-catalytic component of the RNA exosome complex which has 3'-&gt;5' exoribonuclease activity and participates in a multitude of cellular RNA processing and degradation events. In the nucleus, the RNA exosome complex is involved in proper maturation of stable RNA species such as rRNA, snRNA and snoRNA, in the elimination of RNA processing by-products and non-coding 'pervasive' transcripts, such as antisense RNA species and cryptic unstable transcripts (CUTs), and of mRNAs with processing defects, thereby limiting or excluding their export to the cytoplasm. In the cytoplasm, the RNA exosome complex is involved in general mRNA turnover and in RNA surveillance pathways, preventing translation of aberrant mRNAs. The catalytic inactive RNA exosome core complex of 9 subunits (Exo-9) is proposed to play a pivotal role in the binding and presentation of RNA for ribonucleolysis, and to serve as a scaffold for the association with catalytic subunits and accessory proteins or complexes. RRP46 is part of the hexameric ring of RNase PH domain-containing subunits proposed to form a central channel which threads RNA substrates for degradation. The polypeptide is Exosome complex component RRP46 (RRP46) (Saccharomyces cerevisiae (strain ATCC 204508 / S288c) (Baker's yeast)).